The sequence spans 224 residues: Cytidylate kinase (224 aa).

An ATP-binding site is contributed by 11–19 (GPAAAGKST).

Belongs to the cytidylate kinase family. Type 1 subfamily.

The protein localises to the cytoplasm. It catalyses the reaction CMP + ATP = CDP + ADP. It carries out the reaction dCMP + ATP = dCDP + ADP. In Bacillus subtilis (strain 168), this protein is Cytidylate kinase (cmk).